The chain runs to 32 residues: Cytochrome b6-f complex subunit 7 (32 aa).

The helical transmembrane segment at 9-27 (AAVFWVLIPVGLLGGVLLL) threads the bilayer.

It belongs to the PetM family. In terms of assembly, the 4 large subunits of the cytochrome b6-f complex are cytochrome b6, subunit IV (17 kDa polypeptide, PetD), cytochrome f and the Rieske protein, while the 4 small subunits are PetG, PetL, PetM and PetN. The complex functions as a dimer.

Its subcellular location is the cellular thylakoid membrane. In terms of biological role, component of the cytochrome b6-f complex, which mediates electron transfer between photosystem II (PSII) and photosystem I (PSI), cyclic electron flow around PSI, and state transitions. The protein is Cytochrome b6-f complex subunit 7 of Prochlorococcus marinus (strain NATL1A).